Here is a 217-residue protein sequence, read N- to C-terminus: Thiopurine S-methyltransferase (217 aa).

The S-adenosyl-L-methionine site is built by W10, L45, E66, and R123.

It belongs to the class I-like SAM-binding methyltransferase superfamily. TPMT family.

The protein localises to the cytoplasm. It carries out the reaction S-adenosyl-L-methionine + a thiopurine = S-adenosyl-L-homocysteine + a thiopurine S-methylether.. This is Thiopurine S-methyltransferase from Pseudomonas fluorescens (strain Pf0-1).